Consider the following 158-residue polypeptide: NADH-quinone oxidoreductase subunit B (158 aa).

[4Fe-4S] cluster-binding residues include C37, C38, C102, and C132.

Belongs to the complex I 20 kDa subunit family. As to quaternary structure, NDH-1 is composed of 14 different subunits. Subunits NuoB, C, D, E, F, and G constitute the peripheral sector of the complex. The cofactor is [4Fe-4S] cluster.

It is found in the cell inner membrane. It carries out the reaction a quinone + NADH + 5 H(+)(in) = a quinol + NAD(+) + 4 H(+)(out). Functionally, NDH-1 shuttles electrons from NADH, via FMN and iron-sulfur (Fe-S) centers, to quinones in the respiratory chain. Couples the redox reaction to proton translocation (for every two electrons transferred, four hydrogen ions are translocated across the cytoplasmic membrane), and thus conserves the redox energy in a proton gradient. The polypeptide is NADH-quinone oxidoreductase subunit B (Hydrogenovibrio crunogenus (strain DSM 25203 / XCL-2) (Thiomicrospira crunogena)).